The sequence spans 430 residues: Glutamate-1-semialdehyde 2,1-aminomutase (430 aa).

Lysine 267 is modified (N6-(pyridoxal phosphate)lysine).

This sequence belongs to the class-III pyridoxal-phosphate-dependent aminotransferase family. HemL subfamily. As to quaternary structure, homodimer. It depends on pyridoxal 5'-phosphate as a cofactor.

The protein localises to the cytoplasm. It carries out the reaction (S)-4-amino-5-oxopentanoate = 5-aminolevulinate. It participates in porphyrin-containing compound metabolism; protoporphyrin-IX biosynthesis; 5-aminolevulinate from L-glutamyl-tRNA(Glu): step 2/2. This chain is Glutamate-1-semialdehyde 2,1-aminomutase, found in Cytophaga hutchinsonii (strain ATCC 33406 / DSM 1761 / CIP 103989 / NBRC 15051 / NCIMB 9469 / D465).